The following is a 154-amino-acid chain: Transcriptional repressor NrdR (154 aa).

A zinc finger lies at 3 to 34; the sequence is CPTCQYNGTRVVDSRPADDGNSIRRRRECEKC. Positions 49-139 constitute an ATP-cone domain; sequence LIVVKKDGAR…VYRQFKDISV (91 aa).

It belongs to the NrdR family. The cofactor is Zn(2+).

In terms of biological role, negatively regulates transcription of bacterial ribonucleotide reductase nrd genes and operons by binding to NrdR-boxes. The chain is Transcriptional repressor NrdR from Listeria monocytogenes serotype 4a (strain HCC23).